A 402-amino-acid polypeptide reads, in one-letter code: Propionate kinase (402 aa).

Residues asparagine 11 and lysine 18 each coordinate ATP. A Mg(2+)-binding site is contributed by asparagine 11. Arginine 86 contacts substrate. Aspartate 143 (proton donor/acceptor) is an active-site residue. Residues histidine 175, 203 to 207, 278 to 280, and 326 to 330 each bind ATP; these read HLGNG, DLR, and GIGEN.

Belongs to the acetokinase family. TdcD subfamily. Homodimer. Mg(2+) serves as cofactor.

The catalysed reaction is propanoate + ATP = propanoyl phosphate + ADP. The protein operates within amino-acid degradation; L-threonine degradation via propanoate pathway; propanoate from L-threonine: step 4/4. In terms of biological role, catalyzes the conversion of propionyl phosphate and ADP to propionate and ATP. The polypeptide is Propionate kinase (Salmonella agona (strain SL483)).